A 415-amino-acid polypeptide reads, in one-letter code: Elongation factor 1-gamma 1 (415 aa).

At Ser-2 the chain carries N-acetylserine. In terms of domain architecture, GST N-terminal spans 2–78 (SQGTLYANFR…YLVKLSQDDK (77 aa)). Phosphothreonine is present on Thr-32. The GST C-terminal domain maps to 89–215 (DLNAQAQIIR…KDFKFADKPL (127 aa)). Positions 212–256 (DKPLSPPQKKKEKKAPAAAPAASKKKEEAKPAATETETSSKKPKH) are disordered. The EF-1-gamma C-terminal domain maps to 254–415 (PKHPLELLGK…KEIVDGKVLK (162 aa)).

The eukaryotic elongation factor 1 complex (eEF1) is probably a heterohexamer. Two trimeric complexes, each composed of eEF1A (TEF1 or TEF2), eEF1Balpha (EFB1) and eEF1Bgamma (CAM1 or TEF4), are probably dimerized via the eF1Bgamma subunits. The eEF1B subcomplex with the GEF activity is formed of eEF1Balpha and eEF1Bgamma. CAM1 interacts with EFB1. Component of a complex bound to MXR1 promoter region.

It localises to the cytoplasm. Its subcellular location is the nucleus. It functions in the pathway protein biosynthesis; polypeptide chain elongation. Functionally, subunit of the eukaryotic elongation factor 1 complex (eEF1). Probably plays a role in anchoring the complex to other cellular components. May be involved in transcriptional regulation of MXR1. The chain is Elongation factor 1-gamma 1 (CAM1) from Saccharomyces cerevisiae (strain ATCC 204508 / S288c) (Baker's yeast).